We begin with the raw amino-acid sequence, 136 residues long: ATP synthase epsilon chain (136 aa).

The segment at 104–136 (AGMEGQPASPEKVKAQQQLNEARARMQASKSAD) is disordered.

The protein belongs to the ATPase epsilon chain family. As to quaternary structure, F-type ATPases have 2 components, CF(1) - the catalytic core - and CF(0) - the membrane proton channel. CF(1) has five subunits: alpha(3), beta(3), gamma(1), delta(1), epsilon(1). CF(0) has three main subunits: a, b and c.

It is found in the cellular thylakoid membrane. Functionally, produces ATP from ADP in the presence of a proton gradient across the membrane. This Synechococcus sp. (strain CC9902) protein is ATP synthase epsilon chain.